An 819-amino-acid polypeptide reads, in one-letter code: MLPCLFPAYGSVVACKPSAIDRSPFGLLSQPKQTNRTLIRRPKVTKAFMAIEAMRHCSSSSSSEEGGAAATTAARSAVRERLQLAPPSPSPSPYDTAWVAMVPALRRGGGGPRFPQCVAWIQRNQRGDGSWRHAAAAHQQLGSSPEIVTERDLSSTLACVLALARWDAGSEHVRRGLQFIGRNMSVAMDDQTAAPASGSVVSFAAMLRMAMEMGLEVPAVSQADVRDRDAGVICHGGRTEYTAYVSEGLGNIQNWNEVMKFQRKNGSLFNSPYTTAAALVHNYDAKALQYLDMLLDKFGSAVPAAYPANIQSQLYMVDVLEKMGISRHFVGEIKSILDMTYSCWKQRDEEIVLDMQTCGMAFRMLRMNGYDVSSDELSHFSEPSSFHNSLQGYLNDTRSLLELHKASKVSIAEKEVILDNIGSWTGCLLKEQLLSSAMKRNPLSEEVEYALEFPFYTILDRLDHKRNIEHFDITSSQMLETAYLPCHSNEEIMALGVRDFSSSQFIFQEELQQLNSWVKESRLDQLQFARQKLDYFYFSAAATIFTPELSDVRILWAKNGVLTTVVDDFFDVGGSKEELENLVALVEKWDKNDKTEYYSEQVEIVFSAIYTSTNQLGSMASVVQGRDVTKHLVEIWQELLRSMMTEVEWRQSRYVPTAEEYMENAVVTFALGPVVLPALYLVGPKMPDSVIRSQECSELFRLMSKCGRLLNDVQSYEREGSQGKLNSVSLLALHSGGSVSMEEAVKQIQRPIEKCRRELLKLVVSRGGAVPRPCRELFWSMCKVCHFFYSGGDGFSSPTAKAGALDAVIHEPLNLSCSV.

Residues 1–58 constitute a chloroplast transit peptide; sequence MLPCLFPAYGSVVACKPSAIDRSPFGLLSQPKQTNRTLIRRPKVTKAFMAIEAMRHCS. A compositionally biased stretch (low complexity) spans 58–76; sequence SSSSSSEEGGAAATTAARS. The segment at 58-77 is disordered; the sequence is SSSSSSEEGGAAATTAARSA. Mg(2+)-binding residues include aspartate 567, aspartate 571, asparagine 711, serine 715, and glutamate 719. Residues 567-571 carry the DDXXD motif motif; that stretch reads DDFFD.

It belongs to the terpene synthase family. Mg(2+) is required as a cofactor. As to expression, expressed in roots. Highly expressed in stems, flowers and panicle.

It localises to the plastid. The protein resides in the chloroplast. It carries out the reaction ent-copalyl diphosphate = ent-beyerene + diphosphate. It catalyses the reaction ent-copalyl diphosphate = ent-kaur-16-ene + diphosphate. It functions in the pathway secondary metabolite biosynthesis; terpenoid biosynthesis. Functionally, diterpene cyclase involved in jasmonic acid-dependent defense mechanisms in roots by mediating the biosynthesis of labdane-related diterpenoids (LRDs) natural products such as ent-beyerene, an antimicrobial compound. Catalyzes the cyclization of ent-CDP into ent-beyerene as a major and ent-kaurene as a minor product. May be involved in the catalysis of an early step of the gibberellin (GA) biosynthesis pathway. The chain is Ent-beyerene synthase KSL2, chloroplastic from Oryza sativa subsp. japonica (Rice).